Consider the following 192-residue polypeptide: Elongation factor P (192 aa).

The protein belongs to the elongation factor P family.

The protein resides in the cytoplasm. It functions in the pathway protein biosynthesis; polypeptide chain elongation. Involved in peptide bond synthesis. Stimulates efficient translation and peptide-bond synthesis on native or reconstituted 70S ribosomes in vitro. Probably functions indirectly by altering the affinity of the ribosome for aminoacyl-tRNA, thus increasing their reactivity as acceptors for peptidyl transferase. This is Elongation factor P from Borrelia garinii subsp. bavariensis (strain ATCC BAA-2496 / DSM 23469 / PBi) (Borreliella bavariensis).